The sequence spans 500 residues: Cytochrome P450 monooxygenase hepD (500 aa).

The helical transmembrane segment at 15 to 35 threads the bilayer; it reads WILLSLSLAFIVVYSLFYLAV. N-linked (GlcNAc...) asparagine glycans are attached at residues Asn99, Asn185, Asn373, and Asn409. Position 445 (Cys445) interacts with heme. The N-linked (GlcNAc...) asparagine glycan is linked to Asn482.

It belongs to the cytochrome P450 family. It depends on heme as a cofactor.

It is found in the membrane. It functions in the pathway secondary metabolite biosynthesis. Functionally, cytochrome P450 monooxygenase; part of the gene cluster that mediates the biosynthesis of heptelidic acid (HA), a sesquiterpene lactone that acts as an inhibitor of glyceraldehyde-3-phosphatedehydrogenase (GAPDH) and a growth inhibitor of the salt-tolerant lactic acid bacteria in soy sauce brewing. In Aspergillus oryzae (strain ATCC 42149 / RIB 40) (Yellow koji mold), this protein is Cytochrome P450 monooxygenase hepD.